Reading from the N-terminus, the 611-residue chain is Aspartate--tRNA(Asp/Asn) ligase (611 aa).

E174 provides a ligand contact to L-aspartate. The segment at 198-201 (QLFK) is aspartate. R220 is a binding site for L-aspartate. ATP-binding positions include 220–222 (RDE) and Q229. Residue H467 coordinates L-aspartate. Residue E501 participates in ATP binding. Residue R508 coordinates L-aspartate. 553 to 556 (GLDR) provides a ligand contact to ATP.

It belongs to the class-II aminoacyl-tRNA synthetase family. Type 1 subfamily. Homodimer.

It is found in the cytoplasm. It carries out the reaction tRNA(Asx) + L-aspartate + ATP = L-aspartyl-tRNA(Asx) + AMP + diphosphate. Its function is as follows. Aspartyl-tRNA synthetase with relaxed tRNA specificity since it is able to aspartylate not only its cognate tRNA(Asp) but also tRNA(Asn). Reaction proceeds in two steps: L-aspartate is first activated by ATP to form Asp-AMP and then transferred to the acceptor end of tRNA(Asp/Asn). The chain is Aspartate--tRNA(Asp/Asn) ligase from Albidiferax ferrireducens (strain ATCC BAA-621 / DSM 15236 / T118) (Rhodoferax ferrireducens).